The chain runs to 198 residues: Small ribosomal subunit protein uS7 (198 aa).

It belongs to the universal ribosomal protein uS7 family. As to quaternary structure, part of the 30S ribosomal subunit.

In terms of biological role, one of the primary rRNA binding proteins, it binds directly to 16S rRNA where it nucleates assembly of the head domain of the 30S subunit. Is located at the subunit interface close to the decoding center. This chain is Small ribosomal subunit protein uS7, found in Nanoarchaeum equitans (strain Kin4-M).